Consider the following 62-residue polypeptide: Cytotoxin homolog (62 aa).

Disulfide bonds link Cys3–Cys22, Cys15–Cys40, Cys44–Cys55, and Cys56–Cys61.

Belongs to the three-finger toxin family. Short-chain subfamily. Orphan group XV sub-subfamily. Expressed by the venom gland.

It is found in the secreted. Its subcellular location is the target cell membrane. Has low cytotoxic activity. This chain is Cytotoxin homolog, found in Naja kaouthia (Monocled cobra).